Reading from the N-terminus, the 1962-residue chain is MPKPVANQEDEDPTPYLFVSLEQRRIDQSKPYDSKKSCWIPDEKEGYLLGEIKATKGDIVSVGLQGGEVRDIKSEKVEKVNPPKFEKIEDMADMTVLNTPCVLHNLRQRYYAKLIYTYSGLFCVAINPYKRYPVYTNRCAKMYRGKRRNEVPPHIFAISDGAYVDMLTNHVNQSMLITGESGAGKTENTKKVIAYFATVGASKKTDEAAKSKGSLEDQVVQTNPVLEAFGNAKTVRNDNSSRFGKFIRIHFGPTGKLAGADIETYLLEKARVISQQSLERSYHIFYQIMSGSVPGVKDICLLTDNIYDYHIVSQGKVTVASIDDAEEFSLTDQAFDILGFTKQEKEDVYRITAAVMHMGGMKFKQRGREEQAEQDGEEEGGRVSKLFGCDTAELYKNLLKPRIKVGNEFVTQGRNVQQVTNSIGALCKGVFDRLFKWLVKKCNETLDTQQKRQHFIGVLDIAGFEIFEYNGFEQLCINFTNEKLQQFFNHIMFVMEQEEYKKEGINWDFIDFGMDLLACIDLIEKPMGILSILEEESMFPKATDQTFSEKLTNTHLGKSAPFQKPKPPKPGQQAAHFAIAHYAGCVSYNITGWLEKNKDPLNDTVVDQFKKSQNKLLIEIFADHAGQSGGGEQAKGGRGKKGGGFATVSSAYKEQLNSLMTTLRSTQPHFVRCIIPNEMKQPGVVDAHLVMHQLTCNGVLEGIRICRKGFPNRMMYPDFKMRYQILNPRGIKDLDCPKKASKVLIESTELNEDLYRLGHTKVFFRAGVLGQMEEFRDERLGKIMSWMQAWARGYLSRKGFKKLQEQRVALKVVQRNLRKYLQLRTWPWYKLWQKVKPLLNVSRIEDEIARLEEKAKKAEELHAAEVKVRKELEALNAKLLAEKTALLDSLSGEKGALQDYQERNAKLTAQKNDLENQLRDIQERLTQEEDARNQLFQQKKKADQEISGLKKDIEDLELNVQKAEQDKATKDHQIRNLNDEIAHQDELINKLNKEKKMQGETNQKTGEELQAAEDKINHLNKVKAKLEQTLDELEDSLEREKKVRGDVEKSKRKVEGDLKLTQEAVADLERNKKELEQTIQRKDKELSSITAKLEDEQVVVLKHQRQIKELQARIEELEEEVEAERQARAKAEKQRADLARELEELGERLEEAGGATSAQIELNKKREAELSKLRRDLEEANIQHESTLANLRKKHNDAVAEMAEQVDQLNKLKAKAEHDRQTCHNELNQTRTACDQLGRDKAAQEKIAKQLQHTLNEVQSKLDETNRTLNDFDASKKKLSIENSDLLRQLEEAESQVSQLSKIKISLTTQLEDTKRLADEESRERATLLGKFRNLEHDLDNLREQVEEEAEGKADLQRQLSKANAEAQVWRSKYESDGVARSEELEEAKRKLQARLAEAEETIESLNQKCIGLEKTKQRLSTEVEDLQLEVDRANAIANAAEKKQKAFDKIIGEWKLKVDDLAAELDASQKECRNYSTELFRLKGAYEEGQEQLEAVRRENKNLADEVKDLLDQIGEGGRNIHEIEKARKRLEAEKDELQAALEEAEAALEQEENKVLRAQLELSQVRQEIDRRIQEKEEEFENTRKNHQRALDSMQASLEAEAKGKAEALRMKKKLEADINELEIALDHANKANAEAQKNIKRYQQQLKDIQTALEEEQRARDDAREQLGISERRANALQNELEESRTLLEQADRGRRQAEQELADAHEQLNEVSAQNASISAAKRKLESELQTLHSDLDELLNEAKNSEEKAKKAMVDAARLADELRAEQDHAQTQEKLRKALEQQIKELQVRLDEAEANALKGGKKAIQKLEQRVRELENELDGEQRRHADAQKNLRKSERRVKELSFQSEEDRKNHERMQDLVDKLQQKIKTYKRQIEEAEEIAALNLAKFRKAQQELEEAEERADLAEQAISKFRAKGRAGSVGRGASPAPRATSVRPQFDGLAFPPRFDLAPENEF.

The Myosin N-terminal SH3-like domain maps to 33–82 (DSKKSCWIPDEKEGYLLGEIKATKGDIVSVGLQGGEVRDIKSEKVEKVNP). Residues 86 to 777 (EKIEDMADMT…VLGQMEEFRD (692 aa)) form the Myosin motor domain. 179–186 (GESGAGKT) lines the ATP pocket. The actin-binding stretch occupies residues 656-678 (LNSLMTTLRSTQPHFVRCIIPNE). Residues 780-809 (LGKIMSWMQAWARGYLSRKGFKKLQEQRVA) enclose the IQ domain. A coiled-coil region spans residues 802–1927 (KLQEQRVALK…KFRAKGRAGS (1126 aa)). Disordered regions lie at residues 1822-1862 (ENEL…NHER) and 1922-1962 (KGRA…ENEF).

Belongs to the TRAFAC class myosin-kinesin ATPase superfamily. Myosin family. Muscle myosin is a hexameric protein that consists of 2 heavy chain subunits (MHC), 2 alkali light chain subunits (MLC) and 2 regulatory light chain subunits (MLC-2). In terms of tissue distribution, expressed in larval and adult muscles. Isoforms containing exon 9a are expressed in indirect flight muscles, exons 9a and 9b are expressed in jump muscles, exons 9b and 9c are expressed in other larval and adult muscles.

The protein resides in the cytoplasm. It is found in the myofibril. Muscle contraction. This chain is Myosin heavy chain, muscle (Mhc), found in Drosophila melanogaster (Fruit fly).